The following is a 481-amino-acid chain: WD repeat-containing protein 55 homolog (481 aa).

A disordered region spans residues 1-116; sequence MHTHNHFKTP…NRDVETNFDL (116 aa). Composition is skewed to acidic residues over residues 12 to 23, 31 to 46, and 68 to 81; these read DAEEVDDLDDEM, IEQEVLFESDSDDDGF, and DSFDPNAEDSDSDD. 6 WD repeats span residues 144-183, 188-227, 231-269, 272-311, 314-353, and 398-437; these read KLEDFVTDISFHPERNIIALATIIGDVHLYEYANEGNKLI, VHSKACRDVEFTEDGRNLLTCSKDKCVMVTDMETEKLKKL, AHDDAINTLHVLNENLFATGDDAGTVKLWDLRTKQHVFE, QIDDQVTQLLSNEQNTLLLATSADGYLTTFNIPGRKLYVQ, PYEEELNCMGIYRGDSKLVVGTSKGKLYSYNWGSFGYHCD, and QHNMPIEALDVNSTGELLASSSHNNDVRFWNVKYFEDFGD.

This sequence belongs to the WD repeat WDR55 family.

In Drosophila ananassae (Fruit fly), this protein is WD repeat-containing protein 55 homolog.